The sequence spans 437 residues: MKCLGKRRGQAAAFLPLCWLFLKILQPGHSHLYNNRYAGDKVIRFIPKTEEEAYALKKISYQLKVDLWQPSSISYVSEGTVTDVHIPQNGSRALLAFLQEANIQYKVLIEDLQKTLEKGSSLHTQRNRRSLSGYNYEVYHSLEEIQNWMHHLNKTHSGLIHMFSIGRSYEGRSLFILKLGRRSRLKRAVWIDCGIHAREWIGPAFCQWFVKEALLTYKSDPAMRKMLNHLYFYIMPVFNVDGYHFSWTNDRFWRKTRSRNSRFRCRGVDANRNWKVKWCDEGASMHPCDDTYCGPFPESEPEVKAVANFLRKHRKHIRAYLSFHAYAQMLLYPYSYKYATIPNFRCVESAAYKAVNALQSVYGVRYRYGPASTTLYVSSGSSMDWAYKNGIPYAFAFELRDTGYFGFLLPEMLIKPTCTETMLAVKNITMHLLKKCP.

The first 30 residues, 1-30, serve as a signal peptide directing secretion; sequence MKCLGKRRGQAAAFLPLCWLFLKILQPGHS. The propeptide at 31 to 129 is activation peptide; the sequence is HLYNNRYAGD…SSLHTQRNRR (99 aa). N-linked (GlcNAc...) asparagine glycans are attached at residues asparagine 89 and asparagine 153. The Peptidase M14 domain maps to 138-432; the sequence is VYHSLEEIQN…LAVKNITMHL (295 aa). 2 residues coordinate Zn(2+): histidine 196 and glutamate 199. Substrate contacts are provided by residues 196–199, arginine 254, and 271–272; these read HARE and NR. The cysteines at positions 265 and 288 are disulfide-linked. Residue histidine 324 coordinates Zn(2+). Substrate contacts are provided by residues 325–326 and tyrosine 376; that span reads AY. The Proton donor/acceptor role is filled by glutamate 398. Residue asparagine 427 is glycosylated (N-linked (GlcNAc...) asparagine).

This sequence belongs to the peptidase M14 family. It depends on Zn(2+) as a cofactor. In terms of tissue distribution, expressed in the hippocampus, nucleus raphe, and cortex.

It localises to the secreted. The protein localises to the extracellular space. It is found in the extracellular matrix. May be involved in the proteolytic inactivation of enkephalins and neurotensin in some brain areas. May convert inactive angiotensin I into the biologically active angiotensin II. Releases a C-terminal amino acid, with preference for large hydrophobic C-terminal amino acids and shows only very weak activity toward small amino acids and histidine. The chain is Carboxypeptidase A6 (CPA6) from Homo sapiens (Human).